We begin with the raw amino-acid sequence, 305 residues long: Methionyl-tRNA formyltransferase (305 aa).

108–111 provides a ligand contact to (6S)-5,6,7,8-tetrahydrofolate; it reads SLLP.

It belongs to the Fmt family.

It carries out the reaction L-methionyl-tRNA(fMet) + (6R)-10-formyltetrahydrofolate = N-formyl-L-methionyl-tRNA(fMet) + (6S)-5,6,7,8-tetrahydrofolate + H(+). In terms of biological role, attaches a formyl group to the free amino group of methionyl-tRNA(fMet). The formyl group appears to play a dual role in the initiator identity of N-formylmethionyl-tRNA by promoting its recognition by IF2 and preventing the misappropriation of this tRNA by the elongation apparatus. The polypeptide is Methionyl-tRNA formyltransferase (Clavibacter sepedonicus (Clavibacter michiganensis subsp. sepedonicus)).